The following is a 610-amino-acid chain: Glutamine--fructose-6-phosphate aminotransferase [isomerizing] (610 aa).

The active-site Nucleophile; for GATase activity is Cys2. Residues 2 to 218 (CGIVGAVAQR…EGDIAEITRR (217 aa)) form the Glutamine amidotransferase type-2 domain. SIS domains lie at 278–426 (IVDS…VKGH) and 459–600 (LAED…VDQP). The For Fru-6P isomerization activity role is filled by Lys605.

Homodimer.

The protein resides in the cytoplasm. The catalysed reaction is D-fructose 6-phosphate + L-glutamine = D-glucosamine 6-phosphate + L-glutamate. Its function is as follows. Catalyzes the first step in hexosamine metabolism, converting fructose-6P into glucosamine-6P using glutamine as a nitrogen source. The chain is Glutamine--fructose-6-phosphate aminotransferase [isomerizing] from Haemophilus influenzae (strain ATCC 51907 / DSM 11121 / KW20 / Rd).